The primary structure comprises 465 residues: A-type ATP synthase subunit B (465 aa).

The protein belongs to the ATPase alpha/beta chains family. Has multiple subunits with at least A(3), B(3), C, D, E, F, H, I and proteolipid K(x).

The protein resides in the cell membrane. Its function is as follows. Component of the A-type ATP synthase that produces ATP from ADP in the presence of a proton gradient across the membrane. The B chain is a regulatory subunit. The protein is A-type ATP synthase subunit B of Sulfurisphaera tokodaii (strain DSM 16993 / JCM 10545 / NBRC 100140 / 7) (Sulfolobus tokodaii).